The following is a 442-amino-acid chain: UDP-N-acetylmuramate--L-alanine ligase (442 aa).

109–115 provides a ligand contact to ATP; the sequence is GAHGKTS.

This sequence belongs to the MurCDEF family.

It localises to the cytoplasm. The catalysed reaction is UDP-N-acetyl-alpha-D-muramate + L-alanine + ATP = UDP-N-acetyl-alpha-D-muramoyl-L-alanine + ADP + phosphate + H(+). It participates in cell wall biogenesis; peptidoglycan biosynthesis. In terms of biological role, cell wall formation. The polypeptide is UDP-N-acetylmuramate--L-alanine ligase (Streptococcus pyogenes serotype M2 (strain MGAS10270)).